The chain runs to 94 residues: MSEQNSRPQNSERPQRSRRPQGGPRRRRKVDYIAANHIEFIDYKNTELLERFISERGKILPRRVTGTSAKNQRKVTTAIKRARIMALLPFVTED.

Residues 1-12 (MSEQNSRPQNSE) show a composition bias toward low complexity. A disordered region spans residues 1 to 29 (MSEQNSRPQNSERPQRSRRPQGGPRRRRK). Positions 16 to 29 (RSRRPQGGPRRRRK) are enriched in basic residues.

Belongs to the bacterial ribosomal protein bS18 family. As to quaternary structure, part of the 30S ribosomal subunit. Forms a tight heterodimer with protein bS6.

Binds as a heterodimer with protein bS6 to the central domain of the 16S rRNA, where it helps stabilize the platform of the 30S subunit. The sequence is that of Small ribosomal subunit protein bS18 from Leuconostoc citreum (strain KM20).